The primary structure comprises 35 residues: Alpha-amanitin proprotein 1 (35 aa).

A propeptide spanning residues 1 to 10 is cleaved from the precursor; it reads MSDINATRLP. Ile11 carries the (3R,4R)-4,5-dihydroxyisoleucine; in form alpha-amanitin modification. Residue Ile11 is modified to (3R,4S)-4-hydroxyisoleucine; in form gamma-amanitin. Residues 11–18 constitute a cross-link (cyclopeptide (Ile-Pro)); sequence IWGIGCNP. The 2'-cysteinyl-6'-hydroxytryptophan sulfoxide (Trp-Cys) cross-link spans 12-16; the sequence is WGIGC. 4-hydroxyproline is present on Pro18. Residues 19-35 constitute a propeptide that is removed on maturation; that stretch reads CVGDDVTSVLTRGEALC.

Belongs to the MSDIN fungal toxin family. Post-translationally, processed by the macrocyclase-peptidase enzyme POPB to yield a toxic cyclic octapeptide. POPB first removes 10 residues from the N-terminus. Conformational trapping of the remaining peptide forces the enzyme to release this intermediate rather than proceed to macrocyclization. The enzyme rebinds the remaining peptide in a different conformation and catalyzes macrocyclization of the N-terminal 8 residues. In terms of tissue distribution, expressed in basidiocarps.

Major toxin belonging to the bicyclic octapeptides amatoxins that acts by binding non-competitively to RNA polymerase II and greatly slowing the elongation of transcripts from target promoters. This chain is Alpha-amanitin proprotein 1, found in Amanita exitialis (Guangzhou destroying angel).